The sequence spans 461 residues: Alkaline phosphatase 4 (461 aa).

The N-terminal stretch at 1–41 (MKKMSLFQNMKSKLLPIAAVSVLTAGIFAGAELQQTEKASA) is a signal peptide. Position 58 (aspartate 58) interacts with Mg(2+). Aspartate 58 lines the Zn(2+) pocket. Serine 108 (phosphoserine intermediate) is an active-site residue. Positions 161 and 282 each coordinate Mg(2+). Residues aspartate 287, histidine 291, aspartate 329, histidine 330, and histidine 423 each contribute to the Zn(2+) site.

Belongs to the alkaline phosphatase family. Monomer. Mg(2+) is required as a cofactor. Zn(2+) serves as cofactor.

The enzyme catalyses a phosphate monoester + H2O = an alcohol + phosphate. The protein is Alkaline phosphatase 4 (phoA) of Bacillus subtilis (strain 168).